Reading from the N-terminus, the 209-residue chain is Phosphoheptose isomerase (209 aa).

In terms of domain architecture, SIS spans 50–209 (IAETFRNGGK…ELVESMMGYA (160 aa)). 65 to 67 (NGG) is a substrate binding site. Residues H74 and E78 each coordinate Zn(2+). Substrate-binding positions include E78, 109–110 (ND), 135–137 (STS), S140, and Q188. The Zn(2+) site is built by Q188 and H196.

The protein belongs to the SIS family. GmhA subfamily. Zn(2+) is required as a cofactor.

The protein localises to the cytoplasm. It catalyses the reaction 2 D-sedoheptulose 7-phosphate = D-glycero-alpha-D-manno-heptose 7-phosphate + D-glycero-beta-D-manno-heptose 7-phosphate. Its pathway is carbohydrate biosynthesis; D-glycero-D-manno-heptose 7-phosphate biosynthesis; D-glycero-alpha-D-manno-heptose 7-phosphate and D-glycero-beta-D-manno-heptose 7-phosphate from sedoheptulose 7-phosphate: step 1/1. Catalyzes the isomerization of sedoheptulose 7-phosphate in D-glycero-D-manno-heptose 7-phosphate. The sequence is that of Phosphoheptose isomerase from Chlorobaculum parvum (strain DSM 263 / NCIMB 8327) (Chlorobium vibrioforme subsp. thiosulfatophilum).